The following is a 407-amino-acid chain: Imidazolonepropionase (407 aa).

His68 and His70 together coordinate Fe(3+). Positions 68 and 70 each coordinate Zn(2+). Residues Arg77, Tyr140, and His173 each contribute to the 4-imidazolone-5-propanoate site. Tyr140 contributes to the N-formimidoyl-L-glutamate binding site. Fe(3+) is bound at residue His238. A Zn(2+)-binding site is contributed by His238. Gln241 provides a ligand contact to 4-imidazolone-5-propanoate. A Fe(3+)-binding site is contributed by Asp313. Residue Asp313 participates in Zn(2+) binding. N-formimidoyl-L-glutamate is bound by residues Asn315 and Gly317. Residue Thr318 participates in 4-imidazolone-5-propanoate binding.

The protein belongs to the metallo-dependent hydrolases superfamily. HutI family. Zn(2+) is required as a cofactor. Fe(3+) serves as cofactor.

Its subcellular location is the cytoplasm. It carries out the reaction 4-imidazolone-5-propanoate + H2O = N-formimidoyl-L-glutamate. The protein operates within amino-acid degradation; L-histidine degradation into L-glutamate; N-formimidoyl-L-glutamate from L-histidine: step 3/3. Catalyzes the hydrolytic cleavage of the carbon-nitrogen bond in imidazolone-5-propanoate to yield N-formimidoyl-L-glutamate. It is the third step in the universal histidine degradation pathway. This Burkholderia multivorans (strain ATCC 17616 / 249) protein is Imidazolonepropionase.